We begin with the raw amino-acid sequence, 454 residues long: Kynurenine--oxoglutarate transaminase 3 (454 aa).

A substrate-binding site is contributed by Gly-71. Lys-116 carries the post-translational modification N6-acetyllysine; alternate. Residue Lys-116 is modified to N6-succinyllysine; alternate. Asn-218 lines the substrate pocket. Residue Lys-280 is modified to N6-(pyridoxal phosphate)lysine. Arg-429 is a binding site for substrate.

This sequence belongs to the class-I pyridoxal-phosphate-dependent aminotransferase family. In terms of assembly, homodimer. Pyridoxal 5'-phosphate is required as a cofactor.

It catalyses the reaction L-kynurenine + 2-oxoglutarate = kynurenate + L-glutamate + H2O. The catalysed reaction is L-kynurenine + glyoxylate = kynurenate + glycine + H2O. It carries out the reaction 3-hydroxy-L-kynurenine + glyoxylate = xanthurenate + glycine + H2O. The enzyme catalyses an S-substituted L-cysteine + H2O = a thiol + pyruvate + NH4(+). It participates in amino-acid degradation; L-kynurenine degradation; kynurenate from L-kynurenine: step 1/2. Functionally, catalyzes the irreversible transamination of the L-tryptophan metabolite L-kynurenine to form kynurenic acid (KA), an intermediate in the tryptophan catabolic pathway which is also a broad spectrum antagonist of the three ionotropic excitatory amino acid receptors among others. May catalyze the beta-elimination of S-conjugates and Se-conjugates of L-(seleno)cysteine, resulting in the cleavage of the C-S or C-Se bond. Has transaminase activity towards L-kynurenine, tryptophan, phenylalanine, serine, cysteine, methionine, histidine, glutamine and asparagine with glyoxylate as an amino group acceptor (in vitro). Has lower activity with 2-oxoglutarate as amino group acceptor (in vitro). In Rattus norvegicus (Rat), this protein is Kynurenine--oxoglutarate transaminase 3.